The sequence spans 160 residues: Small ribosomal subunit protein bS16 (160 aa).

The segment at 115 to 139 (GGPTTEATRPKKKVSAKKAAKAVES) is disordered. Basic residues predominate over residues 124–134 (PKKKVSAKKAA).

This sequence belongs to the bacterial ribosomal protein bS16 family.

The chain is Small ribosomal subunit protein bS16 from Mycobacterium leprae (strain Br4923).